The chain runs to 426 residues: CinA-like protein (426 aa).

This sequence belongs to the CinA family.

The sequence is that of CinA-like protein from Gloeobacter violaceus (strain ATCC 29082 / PCC 7421).